We begin with the raw amino-acid sequence, 270 residues long: Sugar phosphatase YidA (270 aa).

Residue aspartate 9 is the Nucleophile of the active site. Aspartate 9 contributes to the Mg(2+) binding site. Methionine 10 is a phosphate binding site. Position 11 (aspartate 11) interacts with Mg(2+). Residues 43-44 (TG) and lysine 197 contribute to the phosphate site. A Mg(2+)-binding site is contributed by aspartate 220. Phosphate is bound at residue asparagine 223.

The protein belongs to the HAD-like hydrolase superfamily. Cof family. Homodimer. The cofactor is Mg(2+).

It catalyses the reaction sugar phosphate + H2O = sugar + phosphate.. Its function is as follows. Catalyzes the dephosphorylation of different sugar phosphates. The polypeptide is Sugar phosphatase YidA (yidA) (Escherichia coli O6:H1 (strain CFT073 / ATCC 700928 / UPEC)).